We begin with the raw amino-acid sequence, 41 residues long: Large ribosomal subunit protein bL36 (41 aa).

Belongs to the bacterial ribosomal protein bL36 family.

The chain is Large ribosomal subunit protein bL36 from Rhodopseudomonas palustris (strain BisB18).